Consider the following 528-residue polypeptide: Phosphoenolpyruvate carboxykinase (ATP) (528 aa).

The substrate site is built by R56, Y192, and K198. ATP contacts are provided by residues K198, H217, and 233–241 (GLSGTGKTT). Residues K198 and H217 each contribute to the Mn(2+) site. A Mn(2+)-binding site is contributed by D254. Residues E282, R319, and T444 each contribute to the ATP site. R319 lines the substrate pocket.

This sequence belongs to the phosphoenolpyruvate carboxykinase (ATP) family. Requires Mn(2+) as cofactor.

The protein resides in the cytoplasm. The enzyme catalyses oxaloacetate + ATP = phosphoenolpyruvate + ADP + CO2. Its pathway is carbohydrate biosynthesis; gluconeogenesis. Involved in the gluconeogenesis. Catalyzes the conversion of oxaloacetate (OAA) to phosphoenolpyruvate (PEP) through direct phosphoryl transfer between the nucleoside triphosphate and OAA. In Lysinibacillus sphaericus (strain C3-41), this protein is Phosphoenolpyruvate carboxykinase (ATP).